Reading from the N-terminus, the 235-residue chain is Zinc transporter ZIP9 (235 aa).

Residue asparagine 2 is glycosylated (N-linked (GlcNAc...) asparagine). Transmembrane regions (helical) follow at residues 11 to 31 (SCVP…CWWT), 75 to 95 (TTTL…GAAA), 104 to 124 (LIVF…LVSF), and 138 to 158 (HLLV…LGLS). N-linked (GlcNAc...) asparagine glycosylation is present at asparagine 169. The next 2 membrane-spanning stretches (helical) occupy residues 172 to 192 (GMAM…HVLP) and 214 to 234 (LEVA…VGHQ).

Belongs to the ZIP transporter (TC 2.A.5) family.

It localises to the golgi apparatus. Its subcellular location is the trans-Golgi network membrane. The protein localises to the cell membrane. It is found in the cytoplasm. The protein resides in the perinuclear region. It localises to the mitochondrion. Its subcellular location is the nucleus. It catalyses the reaction Zn(2+)(in) = Zn(2+)(out). Its function is as follows. Transports zinc ions across cell and organelle membranes into the cytoplasm and regulates intracellular zinc homeostasis. Participates in the zinc ions efflux out of the secretory compartments. Regulates intracellular zinc level, resulting in the enhancement of AKT1 and MAPK3/MAPK1 (Erk1/2) phosphorylation in response to the BCR activation. Also functions as a membrane androgen receptor that mediates, through a G protein, the non-classical androgen signaling pathway, characterized by the activation of MAPK3/MAPK1 (Erk1/2) and transcription factors CREB1 or ATF1. This pathway contributes to CLDN1 and CLDN5 expression and tight junction formation between adjacent Sertoli cells. Mediates androgen-induced vascular endothelial cell proliferation through activation of an inhibitory G protein leading to the AKT1 and MAPK3/MAPK1 (Erk1/2) activation which in turn modulate inhibition (phosphorylation) of GSK3B and CCND1 transcription. Moreover, has dual functions as a membrane-bound androgen receptor and as an androgen-dependent zinc transporter both of which are mediated through an inhibitory G protein (Gi) that mediates both MAP kinase and zinc signaling leading to the androgen-dependent apoptotic process. In Macaca fascicularis (Crab-eating macaque), this protein is Zinc transporter ZIP9.